The chain runs to 339 residues: Phosphate acyltransferase (339 aa).

This sequence belongs to the PlsX family. As to quaternary structure, homodimer. Probably interacts with PlsY.

It localises to the cytoplasm. It carries out the reaction a fatty acyl-[ACP] + phosphate = an acyl phosphate + holo-[ACP]. The protein operates within lipid metabolism; phospholipid metabolism. In terms of biological role, catalyzes the reversible formation of acyl-phosphate (acyl-PO(4)) from acyl-[acyl-carrier-protein] (acyl-ACP). This enzyme utilizes acyl-ACP as fatty acyl donor, but not acyl-CoA. The polypeptide is Phosphate acyltransferase (Pasteurella multocida (strain Pm70)).